The primary structure comprises 137 residues: Bet1-like protein At4g14600 (137 aa).

Over 1–113 the chain is Cytoplasmic; it reads MASNPHRSGA…MSIIRSGNNH (113 aa). One can recognise a t-SNARE coiled-coil homology domain in the interval 43–105; sequence DPMHSDLDDE…KNNIRKLNMS (63 aa). The helical; Anchor for type IV membrane protein transmembrane segment at 114–134 threads the bilayer; sequence IMHVVLFALLVFFVLYIWSKM. Topologically, residues 135–137 are vesicular; the sequence is FKR.

This sequence belongs to the BET1 family.

It localises to the golgi apparatus membrane. The protein localises to the endoplasmic reticulum membrane. In terms of biological role, required for vesicular transport from the ER to the Golgi complex. Functions as a SNARE associated with ER-derived vesicles. The chain is Bet1-like protein At4g14600 from Arabidopsis thaliana (Mouse-ear cress).